The sequence spans 215 residues: ATP-dependent dethiobiotin synthetase BioD (215 aa).

13–18 (DIGKTV) contributes to the ATP binding site. Thr17 lines the Mg(2+) pocket. The active site involves Lys38. Thr42 contacts substrate. ATP-binding positions include Asp50, 115–118 (EGAG), and 175–176 (NH). Mg(2+) is bound by residues Asp50 and Glu115.

This sequence belongs to the dethiobiotin synthetase family. In terms of assembly, homodimer. The cofactor is Mg(2+).

The protein localises to the cytoplasm. The catalysed reaction is (7R,8S)-7,8-diammoniononanoate + CO2 + ATP = (4R,5S)-dethiobiotin + ADP + phosphate + 3 H(+). Its pathway is cofactor biosynthesis; biotin biosynthesis; biotin from 7,8-diaminononanoate: step 1/2. In terms of biological role, catalyzes a mechanistically unusual reaction, the ATP-dependent insertion of CO2 between the N7 and N8 nitrogen atoms of 7,8-diaminopelargonic acid (DAPA, also called 7,8-diammoniononanoate) to form a ureido ring. The protein is ATP-dependent dethiobiotin synthetase BioD of Neisseria meningitidis serogroup C (strain 053442).